Consider the following 626-residue polypeptide: Chaperone protein HtpG (626 aa).

An a; substrate-binding region spans residues 1 to 331; that stretch reads MSETVERHEF…TDDLPLNVSR (331 aa). The segment at 332 to 544 is b; the sequence is EMLQSTPTLQ…GMGPDLQMQR (213 aa). The segment at 545–626 is c; it reads LLRRAGRGFG…GTAAKPAESA (82 aa).

This sequence belongs to the heat shock protein 90 family. In terms of assembly, homodimer.

It localises to the cytoplasm. Functionally, molecular chaperone. Has ATPase activity. This is Chaperone protein HtpG from Methylorubrum extorquens (strain PA1) (Methylobacterium extorquens).